We begin with the raw amino-acid sequence, 235 residues long: Hydroxyacylglutathione hydrolase (235 aa).

The Zn(2+) site is built by histidine 53, histidine 55, aspartate 57, histidine 58, histidine 109, aspartate 127, and histidine 165.

Belongs to the metallo-beta-lactamase superfamily. Glyoxalase II family. As to quaternary structure, monomer. It depends on Zn(2+) as a cofactor.

The enzyme catalyses an S-(2-hydroxyacyl)glutathione + H2O = a 2-hydroxy carboxylate + glutathione + H(+). It participates in secondary metabolite metabolism; methylglyoxal degradation; (R)-lactate from methylglyoxal: step 2/2. Its function is as follows. Thiolesterase that catalyzes the hydrolysis of S-D-lactoyl-glutathione to form glutathione and D-lactic acid. The protein is Hydroxyacylglutathione hydrolase of Glaesserella parasuis serovar 5 (strain SH0165) (Haemophilus parasuis).